A 266-amino-acid chain; its full sequence is E3 ubiquitin-protein ligase RNF170 (266 aa).

Topologically, residues 1 to 26 are lumenal; sequence MEGSVCVDGAAAPAPDEASLIEGVSN. Residues 27 to 47 form a helical membrane-spanning segment; the sequence is AVLLVLVLSVTLLAGLTTLLC. Over 48 to 209 the chain is Cytoplasmic; sequence RSEQQRIHPE…GGLFWMFRVR (162 aa). An RING-type zinc finger spans residues 88 to 131; sequence CPVCLQQAVLPVETNCGHLFCGSCIIAYWRYGTWLGAISCPICR. The helical transmembrane segment at 210-230 threads the bilayer; sequence ILLCVCGALAYLVSPLDFLPE. Gly-231 is a topological domain (lumenal). The helical transmembrane segment at 232–252 threads the bilayer; the sequence is VLGLLGFLDDFFVILLLFIYI. Residues 253-266 lie on the Cytoplasmic side of the membrane; that stretch reads SIMYREVVTQRLAG.

As to expression, highly expressed in the developing brain, and less within intersomitic structures of the trunk.

The protein localises to the endoplasmic reticulum membrane. The enzyme catalyses S-ubiquitinyl-[E2 ubiquitin-conjugating enzyme]-L-cysteine + [acceptor protein]-L-lysine = [E2 ubiquitin-conjugating enzyme]-L-cysteine + N(6)-ubiquitinyl-[acceptor protein]-L-lysine.. It functions in the pathway protein modification; protein ubiquitination. In terms of biological role, E3 ubiquitin-protein ligase that plays an essential role in stimulus-induced inositol 1,4,5-trisphosphate receptor (ITPR) ubiquitination and degradation via the endoplasmic reticulum-associated degradation (ERAD) pathway. Also involved in ITPR turnover in resting cells. This Danio rerio (Zebrafish) protein is E3 ubiquitin-protein ligase RNF170 (rnf170).